Here is a 256-residue protein sequence, read N- to C-terminus: Phosphatidylglycerol--prolipoprotein diacylglyceryl transferase 2 (256 aa).

The next 3 helical transmembrane spans lie at leucine 11 to phenylalanine 31, phenylalanine 46 to isoleucine 66, and phenylalanine 83 to cysteine 103. Arginine 130 provides a ligand contact to a 1,2-diacyl-sn-glycero-3-phospho-(1'-sn-glycerol). 3 helical membrane-spanning segments follow: residues alanine 142–valine 162, leucine 164–tryptophan 184, and valine 221–leucine 241.

The protein belongs to the Lgt family.

The protein localises to the cell membrane. The enzyme catalyses L-cysteinyl-[prolipoprotein] + a 1,2-diacyl-sn-glycero-3-phospho-(1'-sn-glycerol) = an S-1,2-diacyl-sn-glyceryl-L-cysteinyl-[prolipoprotein] + sn-glycerol 1-phosphate + H(+). Its pathway is protein modification; lipoprotein biosynthesis (diacylglyceryl transfer). In terms of biological role, catalyzes the transfer of the diacylglyceryl group from phosphatidylglycerol to the sulfhydryl group of the N-terminal cysteine of a prolipoprotein, the first step in the formation of mature lipoproteins. The polypeptide is Phosphatidylglycerol--prolipoprotein diacylglyceryl transferase 2 (Clostridium perfringens (strain 13 / Type A)).